We begin with the raw amino-acid sequence, 1191 residues long: Laminin subunit gamma-2 (1191 aa).

Residues 1–21 (MPALWLSCCLGVALLLPAAQA) form the signal peptide. Disulfide bonds link Cys28-Cys37, Cys30-Cys53, Cys56-Cys65, Cys68-Cys81, Cys84-Cys96, Cys86-Cys102, Cys104-Cys113, Cys116-Cys128, Cys139-Cys150, Cys141-Cys155, Cys157-Cys166, and Cys169-Cys184. Laminin EGF-like domains follow at residues 28–83 (CDCN…RCLP), 84–130 (CNCH…GCTR), and 139–186 (CDCD…GCTQ). A Laminin EGF-like 4; first part domain is found at 187 to 196 (CFCYGHSASC). A Laminin IV type A domain is found at 213 to 381 (QDVDGWKAVQ…SGAPAPWVER (169 aa)). Asn342 and Asn362 each carry an N-linked (GlcNAc...) asparagine glycan. Residues 382–415 (CVCPAGYKGQFCQECASGYKRDSARLGPFGACVP) form the Laminin EGF-like 4; second part domain. 3 Laminin EGF-like domains span residues 416 to 461 (CNCQ…SCKP), 462 to 516 (CPCH…PCQR), and 517 to 572 (CQCN…KCRA). 11 cysteine pairs are disulfide-bonded: Cys462-Cys470, Cys464-Cys481, Cys484-Cys493, Cys496-Cys514, Cys517-Cys531, Cys519-Cys538, Cys541-Cys550, Cys553-Cys570, Cys573-Cys585, Cys575-Cys591, and Cys593-Cys602. An N-linked (GlcNAc...) asparagine glycan is attached at Asn526. A Laminin EGF-like 8; truncated domain is found at 573–602 (CNCSPMGSEPGECRGDGSCVCKPGFGGLNC). Positions 586–588 (RGD) match the Cell attachment site motif. Residues 603–1191 (DHAALTSCPA…CYNTQALEQQ (589 aa)) are domain II and I. Coiled-coil stretches lie at residues 612–710 (ACYN…IRAL) and 759–786 (LAQEATRKADSHAESANAMKQLARETED). Ser805 carries an O-linked (Xyl...) (chondroitin sulfate) serine glycan. An N-linked (GlcNAc...) asparagine glycan is attached at Asn941. Residues 946–996 (EVENILKNLREFDLQVEDRKAEAEEAMKRLSSISQKVADASDKTQQAETAL) are a coiled coil. N-linked (GlcNAc...) asparagine glycosylation occurs at Asn1032. Positions 1139–1178 (LMSDLEERVRRQRNHLHLLETSIDGILADVKNLENIRDNL) form a coiled coil.

Laminin is a complex glycoprotein, consisting of three different polypeptide chains (alpha, beta, gamma), which are bound to each other by disulfide bonds into a cross-shaped molecule comprising one long and three short arms with globules at each end. Gamma-2 is a subunit of laminin-5 (laminin-332 or epiligrin/kalinin/nicein). Binds to fibulin-1, fibulin-1c, fibulin-2 and nidogen. Post-translationally, O-glycosylated; contains chondroitin sulfate (CS). In terms of tissue distribution, epithelial cells of many tissues, particularly high levels in tongue, hair follicles and kidney. Basement membranes of the collecting tubules of kidney and pancreas.

It localises to the secreted. The protein resides in the extracellular space. Its subcellular location is the extracellular matrix. It is found in the basement membrane. In terms of biological role, binding to cells via a high affinity receptor, laminin is thought to mediate the attachment, migration and organization of cells into tissues during embryonic development by interacting with other extracellular matrix components. This chain is Laminin subunit gamma-2 (Lamc2), found in Mus musculus (Mouse).